A 155-amino-acid chain; its full sequence is Deoxyuridine 5'-triphosphate nucleotidohydrolase (155 aa).

Residues 74–76, asparagine 87, and 91–93 contribute to the substrate site; these read RSG and TID.

This sequence belongs to the dUTPase family. The cofactor is Mg(2+).

It carries out the reaction dUTP + H2O = dUMP + diphosphate + H(+). Its pathway is pyrimidine metabolism; dUMP biosynthesis; dUMP from dCTP (dUTP route): step 2/2. This enzyme is involved in nucleotide metabolism: it produces dUMP, the immediate precursor of thymidine nucleotides and it decreases the intracellular concentration of dUTP so that uracil cannot be incorporated into DNA. In Cereibacter sphaeroides (strain KD131 / KCTC 12085) (Rhodobacter sphaeroides), this protein is Deoxyuridine 5'-triphosphate nucleotidohydrolase.